The chain runs to 252 residues: Imidazole glycerol phosphate synthase subunit HisF (252 aa).

Residues Asp11 and Asp130 contribute to the active site.

It belongs to the HisA/HisF family. In terms of assembly, heterodimer of HisH and HisF.

It is found in the cytoplasm. The catalysed reaction is 5-[(5-phospho-1-deoxy-D-ribulos-1-ylimino)methylamino]-1-(5-phospho-beta-D-ribosyl)imidazole-4-carboxamide + L-glutamine = D-erythro-1-(imidazol-4-yl)glycerol 3-phosphate + 5-amino-1-(5-phospho-beta-D-ribosyl)imidazole-4-carboxamide + L-glutamate + H(+). Its pathway is amino-acid biosynthesis; L-histidine biosynthesis; L-histidine from 5-phospho-alpha-D-ribose 1-diphosphate: step 5/9. In terms of biological role, IGPS catalyzes the conversion of PRFAR and glutamine to IGP, AICAR and glutamate. The HisF subunit catalyzes the cyclization activity that produces IGP and AICAR from PRFAR using the ammonia provided by the HisH subunit. The chain is Imidazole glycerol phosphate synthase subunit HisF from Citrifermentans bemidjiense (strain ATCC BAA-1014 / DSM 16622 / JCM 12645 / Bem) (Geobacter bemidjiensis).